The primary structure comprises 580 residues: (3S,6E)-nerolidol synthase 1, chloroplastic (580 aa).

A chloroplast-targeting transit peptide spans 1-31 (MASSSWAFFKVFNPQIAPKSISHIGQSDLMQ). Mg(2+) is bound by residues Asp-334, Asp-338, Asp-478, Ser-482, and Glu-486. The DDXXD motif signature appears at 334–338 (DDIFD).

Belongs to the terpene synthase family. Tpsg subfamily. Requires Mg(2+) as cofactor. Mn(2+) is required as a cofactor.

The protein resides in the plastid. The protein localises to the chloroplast. The catalysed reaction is (2E,6E)-farnesyl diphosphate + H2O = (3S,6E)-nerolidol + diphosphate. It participates in secondary metabolite biosynthesis; terpenoid biosynthesis. Functionally, involved in monoterpene (C10) and sesquiterpene (C15) biosynthesis. Converts geranyl diphosphate (GPP) into S-linalool and farnesyl diphosphate (FPP) into (3S)-E-nerolidol. Probably not expressed in wild strawberry species. In Fragaria vesca (Woodland strawberry), this protein is (3S,6E)-nerolidol synthase 1, chloroplastic.